We begin with the raw amino-acid sequence, 431 residues long: Trigger factor (431 aa).

The PPIase FKBP-type domain occupies 158–243 (GDLVAVETWS…VAEVSEPVVP (86 aa)).

It belongs to the FKBP-type PPIase family. Tig subfamily.

It localises to the cytoplasm. It catalyses the reaction [protein]-peptidylproline (omega=180) = [protein]-peptidylproline (omega=0). Functionally, involved in protein export. Acts as a chaperone by maintaining the newly synthesized protein in an open conformation. Functions as a peptidyl-prolyl cis-trans isomerase. This Stenotrophomonas maltophilia (strain K279a) protein is Trigger factor.